Consider the following 156-residue polypeptide: Small ribosomal subunit protein uS7 (156 aa).

This sequence belongs to the universal ribosomal protein uS7 family. In terms of assembly, part of the 30S ribosomal subunit. Contacts proteins S9 and S11.

Functionally, one of the primary rRNA binding proteins, it binds directly to 16S rRNA where it nucleates assembly of the head domain of the 30S subunit. Is located at the subunit interface close to the decoding center, probably blocks exit of the E-site tRNA. The polypeptide is Small ribosomal subunit protein uS7 (Symbiobacterium thermophilum (strain DSM 24528 / JCM 14929 / IAM 14863 / T)).